The following is a 155-amino-acid chain: Cytochrome c-type biogenesis protein CcmE (155 aa).

Residues 1 to 8 (MNPLRKKR) lie on the Cytoplasmic side of the membrane. A helical; Signal-anchor for type II membrane protein transmembrane segment spans residues 9–29 (LLIIVALLAGVGLAVTLALSA). Over 30–155 (LQENINLFYT…AASPTPVKQG (126 aa)) the chain is Periplasmic. The heme site is built by H124 and Y128.

It belongs to the CcmE/CycJ family.

Its subcellular location is the cell inner membrane. Functionally, heme chaperone required for the biogenesis of c-type cytochromes. Transiently binds heme delivered by CcmC and transfers the heme to apo-cytochromes in a process facilitated by CcmF and CcmH. The protein is Cytochrome c-type biogenesis protein CcmE of Pseudomonas syringae pv. syringae (strain B728a).